The chain runs to 423 residues: Alpha-1-antichymotrypsin (423 aa).

Residues 1–23 (MERMLPLLALGLLAAGFCPAVLC) form the signal peptide. Residues Asn33, Asn93, Asn106, Asn127, and Asn186 are each glycosylated (N-linked (GlcNAc...) asparagine). Residues 235–237 (KKK) mediate DNA binding. Asn271 carries N-linked (GlcNAc...) asparagine glycosylation. The tract at residues 369 to 394 (GTEASAATAVKITLLSALVETRTIVR) is RCL. The tract at residues 381-389 (TLLSALVET) is O-glycosylated at one site.

It belongs to the serpin family. Interacts with DNAJC1. N- and O-glycosylated. As to expression, plasma. Synthesized in the liver. Like the related alpha-1-antitrypsin, its concentration increases in the acute phase of inflammation or infection. Found in the amyloid plaques from the hippocampus of Alzheimer disease brains.

Its subcellular location is the secreted. Its function is as follows. Although its physiological function is unclear, it can inhibit neutrophil cathepsin G and mast cell chymase, both of which can convert angiotensin-1 to the active angiotensin-2. The sequence is that of Alpha-1-antichymotrypsin (SERPINA3) from Homo sapiens (Human).